The chain runs to 263 residues: uncharacterized protein (263 aa).

Position 17–41 (17–41 (GGGRGLGAAIALAFAQAGADVLIAS)) interacts with NAD(+). Substrate is bound at residue Ser147. The active-site Proton acceptor is Tyr160. Lys164 is an NAD(+) binding site.

Belongs to the short-chain dehydrogenases/reductases (SDR) family.

This is an uncharacterized protein from Mycobacterium tuberculosis (strain CDC 1551 / Oshkosh).